Reading from the N-terminus, the 478-residue chain is Lysine histidine transporter-like 7 (478 aa).

Residues Met1–Tyr63 are Cytoplasmic-facing. The tract at residues Glu15–Arg45 is disordered. The helical transmembrane segment at Thr64–Ala86 threads the bilayer. The Extracellular segment spans residues Ala87–Gly89. A helical transmembrane segment spans residues Trp90–Val112. Over Gln113–Lys140 the chain is Cytoplasmic. Residues Leu141–Thr161 form a helical membrane-spanning segment. Residues Gly162–Asn177 are Extracellular-facing. The chain crosses the membrane as a helical span at residues Thr178–Ser198. Residues Gln199 to Ser205 lie on the Cytoplasmic side of the membrane. Residues Leu206–Ile226 traverse the membrane as a helical segment. The Extracellular segment spans residues Leu227–Ser241. A helical membrane pass occupies residues Tyr242–Val262. The Cytoplasmic portion of the chain corresponds to Tyr263–Ala291. A helical transmembrane segment spans residues Val292–Trp312. Over Ala313 to Ala340 the chain is Extracellular. A helical transmembrane segment spans residues Ala341–Met361. The Cytoplasmic portion of the chain corresponds to Pro362–Ala379. A helical transmembrane segment spans residues Ser380–Phe402. Residues Pro403–Pro406 lie on the Extracellular side of the membrane. The helical transmembrane segment at Tyr407–Ile429 threads the bilayer. At Ser430–Pro439 the chain is on the cytoplasmic side. A helical transmembrane segment spans residues Met440–Val460. Over Ala461–Pro478 the chain is Extracellular.

This sequence belongs to the amino acid/polyamine transporter 2 family. Amino acid/auxin permease (AAAP) (TC 2.A.18.2) subfamily.

The protein localises to the cell membrane. Functionally, amino acid transporter. This chain is Lysine histidine transporter-like 7, found in Arabidopsis thaliana (Mouse-ear cress).